Consider the following 231-residue polypeptide: Transmembrane gamma-carboxyglutamic acid protein 3 (231 aa).

A propeptide spanning residues Met1–Arg19 is cleaved from the precursor. In terms of domain architecture, Gla spans Ala20–Asn65. At Ala20–Asp78 the chain is on the extracellular side. 4-carboxyglutamate occurs at positions 22, 25, 26, 33, 35, 38, 39, 44, 45, 48, 51, 54, and 58. An intrachain disulfide couples Cys36 to Cys41. The chain crosses the membrane as a helical span at residues Ala79 to Trp101. At Arg102 to Lys231 the chain is on the cytoplasmic side. Disordered regions lie at residues His140–Gly165 and Leu182–Lys231. Low complexity predominate over residues Glu202–Ser213.

Post-translationally, gla residues are produced after subsequent post-translational modifications of glutamate by a vitamin K-dependent gamma-carboxylase. As to expression, expressed in brain, lung, kidney and heart.

It is found in the membrane. This Homo sapiens (Human) protein is Transmembrane gamma-carboxyglutamic acid protein 3 (PRRG3).